A 475-amino-acid chain; its full sequence is Sulfate adenylyltransferase subunit 1 (475 aa).

In terms of domain architecture, tr-type G spans 25 to 239 (KSLLRFLTCG…EVLETVEIQR (215 aa)). A G1 region spans residues 34 to 41 (GSVDDGKS). Residue 34–41 (GSVDDGKS) coordinates GTP. The G2 stretch occupies residues 92–96 (GITID). The tract at residues 113 to 116 (DTPG) is G3. GTP is bound by residues 113 to 117 (DTPGH) and 168 to 171 (NKMD). The interval 168–171 (NKMD) is G4. The interval 206–208 (SAL) is G5.

This sequence belongs to the TRAFAC class translation factor GTPase superfamily. Classic translation factor GTPase family. CysN/NodQ subfamily. In terms of assembly, heterodimer composed of CysD, the smaller subunit, and CysN.

It carries out the reaction sulfate + ATP + H(+) = adenosine 5'-phosphosulfate + diphosphate. It functions in the pathway sulfur metabolism; hydrogen sulfide biosynthesis; sulfite from sulfate: step 1/3. Its function is as follows. With CysD forms the ATP sulfurylase (ATPS) that catalyzes the adenylation of sulfate producing adenosine 5'-phosphosulfate (APS) and diphosphate, the first enzymatic step in sulfur assimilation pathway. APS synthesis involves the formation of a high-energy phosphoric-sulfuric acid anhydride bond driven by GTP hydrolysis by CysN coupled to ATP hydrolysis by CysD. The polypeptide is Sulfate adenylyltransferase subunit 1 (Shigella sonnei (strain Ss046)).